The following is an 848-amino-acid chain: Neuroligin-3 (848 aa).

The N-terminal stretch at 1–37 (MWLQLGLPSLSLSPTPTVGRSLCLILWFLSLVLRAST) is a signal peptide. The Extracellular portion of the chain corresponds to 38-709 (QAPAPTVNTH…NPRDYSTELS (672 aa)). Residue N98 is glycosylated (N-linked (GlcNAc...) asparagine). A disulfide bond links C106 and C141. The segment at 169–195 (CRKGGSGAKKQGEDLADNDGDEDEDIR) is disordered. A compositionally biased stretch (acidic residues) spans 182 to 194 (DLADNDGDEDEDI). 2 cysteine pairs are disulfide-bonded: C340-C351 and C510-C544. N-linked (GlcNAc...) asparagine glycosylation is present at N545. Composition is skewed to polar residues over residues 645-656 (TKVPPPDTTHSS) and 677-689 (AYSN…SWNG). Residues 645–691 (TKVPPPDTTHSSHITRRPNGKTWSTKRPAISPAYSNENAPGSWNGDQ) are disordered. A helical membrane pass occupies residues 710 to 730 (VTIAVGASLLFLNVLAFAALY). Over 731 to 848 (YRKDKRRQEP…LPNSHSTTRV (118 aa)) the chain is Cytoplasmic. Phosphoserine is present on S745. Y792 carries the post-translational modification Phosphotyrosine.

It belongs to the type-B carboxylesterase/lipase family. As to quaternary structure, homodimer, and heterodimer with NLGN1 and NLGN2. Interacts with neurexins NRXN1, NRXN2 and NRXN3. Interaction with neurexins is mediated by heparan sulfate glycan modification on neurexin. Interacts (via its C-terminus) with DLG4/PSD-95 (via PDZ domain 3). In terms of processing, the N-terminus is blocked. In terms of tissue distribution, detected in brain and on hippocampus neurons, especially at excitatory synapses. Detected in retina (at protein level). Expressed in brain, spinal cord and dorsal root ganglion.

The protein localises to the cell membrane. It localises to the synapse. Its function is as follows. Cell surface protein involved in cell-cell-interactions via its interactions with neurexin family members. Plays a role in synapse function and synaptic signal transmission, and probably mediates its effects by recruiting and clustering other synaptic proteins. May promote the initial formation of synapses, but is not essential for this. May also play a role in glia-glia or glia-neuron interactions in the developing peripheral nervous system. The polypeptide is Neuroligin-3 (Nlgn3) (Rattus norvegicus (Rat)).